Reading from the N-terminus, the 510-residue chain is Aromatic-L-amino-acid decarboxylase (510 aa).

Polar residues predominate over residues 1 to 17 (MSHIPISNTIPPKQTDG). The tract at residues 1–29 (MSHIPISNTIPPKQTDGNGKANISPDKLD) is disordered. Threonine 117 is a binding site for substrate. Pyridoxal 5'-phosphate-binding residues include alanine 183, serine 184, histidine 227, aspartate 305, and asparagine 334. Histidine 227 serves as a coordination point for substrate. At lysine 337 the chain carries N6-(pyridoxal phosphate)lysine. The interval 358 to 384 (NAFNVDPLYLKHDMQGSAPDYRHWQIP) is disordered.

Belongs to the group II decarboxylase family. In terms of assembly, homodimer. Requires pyridoxal 5'-phosphate as cofactor.

The catalysed reaction is L-dopa + H(+) = dopamine + CO2. It catalyses the reaction 5-hydroxy-L-tryptophan + H(+) = serotonin + CO2. Functionally, catalyzes the decarboxylation of L-3,4-dihydroxyphenylalanine (L-DOPA) to dopamine and L-5-hydroxytryptophan (5-HTP) to serotonin. Catalyzes the formation of serotonin more efficiently than dopamine. Displays no activity to tyrosine. Variation in the synthesis of bioamines may be a factor contributing to natural variation in life span. This Drosophila simulans (Fruit fly) protein is Aromatic-L-amino-acid decarboxylase (Ddc).